The chain runs to 845 residues: Cadherin-related family member 5 (845 aa).

An N-terminal signal peptide occupies residues 1-25 (MGSWALLWPPLLFTGLLVRPPGTMA). The Extracellular segment spans residues 26–669 (QAQYCSVNKD…DKRFSVVDMA (644 aa)). N44, N81, N140, N198, N297, N308, and N405 each carry an N-linked (GlcNAc...) asparagine glycan. 4 consecutive Cadherin domains span residues 71–124 (FRIQ…APEF), 125–237 (PFKT…PPWF), 249–354 (IQAQ…PPRF), and 355–459 (PQRL…PPST). Residues 452-661 (SEQEPPSTDV…SSGGGPSEDK (210 aa)) are disordered. Low complexity predominate over residues 506 to 518 (SGTTLRPPTSSTP). Residue N526 is glycosylated (N-linked (GlcNAc...) asparagine). Polar residues-rich tracts occupy residues 539-549 (TAQTPKPGTSQ), 556-594 (GTSTSHQPATPSGGTAQTPEPGTSQPMPPSMGTSTSHQP), and 602-611 (AQTPEAGTSQ). 3 consecutive repeat copies span residues 540 to 570 (AQTPKPGTSQPMPPGVGTSTSHQPATPSGGT), 571 to 601 (AQTPEPGTSQPMPPSMGTSTSHQPATPGGGT), and 602 to 631 (AQTPEAGTSQPMPPGMGTSTSHQPTTPGGG). The interval 540–645 (AQTPKPGTSQ…PEPGTSQPMP (106 aa)) is 4 X 31 AA approximate tandem repeats. Residues 632–645 (TAQTPEPGTSQPMP) form a 4; truncated repeat. The segment covering 633 to 652 (AQTPEPGTSQPMPLSKSTPS) has biased composition (low complexity). Residues 670-690 (ALGGVLGALLLLALLGLAVLV) form a helical membrane-spanning segment. At 691–845 (HKHYGPRLKC…DAPGGDDSYI (155 aa)) the chain is on the cytoplasmic side. The tract at residues 691–845 (HKHYGPRLKC…DAPGGDDSYI (155 aa)) is mediates interaction with USH1C and MYO7B and is required for proper localization to microvilli tips and function in microvilli organization. The disordered stretch occupies residues 724-789 (ANWAPVPSPT…KERRPEGGYK (66 aa)). Positions 729–762 (VPSPTHDPKPAEAPMPAEPAPPGPASPGGAPEPP) are enriched in pro residues. The residue at position 770 (S770) is a Phosphoserine. T810 bears the Phosphothreonine mark. The segment at 811–845 (LDVDGASDSGSGDEGEGAGRGGGPYDAPGGDDSYI) is disordered. Residues S817, S819, and S821 each carry the phosphoserine modification. Low complexity predominate over residues 835-845 (YDAPGGDDSYI).

In terms of assembly, part of the IMAC/intermicrovillar adhesion complex/intermicrovillar tip-link complex composed of ANKS4B, MYO7B, USH1C, CDHR2 and CDHR5. Interacts (via cytoplasmic domain) with USH1C and MYO7B; required for proper localization of CDHR5 to microvilli tips and its function in brush border differentiation. N- and O-glycosylated. As to expression, highest expression in kidney, liver, colon and small intestine. In kidney, expressed apically along brush border of proximal convoluted tubule but not in cortical collecting ducts. Isoform 1 is expressed primarily in adult small intestine and colon. Isoform 2 is highly expressed in fetal liver. Expressed in duodenum with higher expression in enterocytes along the villus axis and lower expression in crypts (at protein level).

It is found in the apical cell membrane. The protein resides in the cell projection. Its subcellular location is the microvillus membrane. Intermicrovillar adhesion molecule that forms, via its extracellular domain, calcium-dependent heterophilic complexes with CDHR2 on adjacent microvilli. Thereby, controls the packing of microvilli at the apical membrane of epithelial cells. Through its cytoplasmic domain, interacts with microvillus cytoplasmic proteins to form the intermicrovillar adhesion complex/IMAC. This complex plays a central role in microvilli and epithelial brush border differentiation. The polypeptide is Cadherin-related family member 5 (Homo sapiens (Human)).